The primary structure comprises 38 residues: Trypsin inhibitor DE5 beta chain (38 aa).

The protein belongs to the protease inhibitor I3 (leguminous Kunitz-type inhibitor) family. In terms of assembly, heterodimer of an alpha and a beta chain linked by a disulfide bond.

In terms of biological role, inhibition of trypsin. In Adenanthera pavonina (Sandal bead tree), this protein is Trypsin inhibitor DE5 beta chain.